Consider the following 403-residue polypeptide: uncharacterized protein (403 aa).

2 helical membrane-spanning segments follow: residues 29–49 (FVIF…CGFL) and 55–75 (AFIA…FFGC).

The protein belongs to the chlamydial CPn_0129/CT_036/TC_0306 family.

It localises to the cell membrane. This is an uncharacterized protein from Chlamydia trachomatis serovar D (strain ATCC VR-885 / DSM 19411 / UW-3/Cx).